The following is a 180-amino-acid chain: Translation initiation factor IF-3 (180 aa).

Belongs to the IF-3 family. Monomer.

Its subcellular location is the cytoplasm. Its function is as follows. IF-3 binds to the 30S ribosomal subunit and shifts the equilibrium between 70S ribosomes and their 50S and 30S subunits in favor of the free subunits, thus enhancing the availability of 30S subunits on which protein synthesis initiation begins. The protein is Translation initiation factor IF-3 of Xylella fastidiosa (strain 9a5c).